A 631-amino-acid polypeptide reads, in one-letter code: Probable protein phosphatase 2C 31 (631 aa).

Disordered stretches follow at residues 119 to 142 (GPLH…SDRF) and 205 to 231 (LSGR…PKGN). A compositionally biased stretch (polar residues) spans 131–140 (ASGSASTASD). In terms of domain architecture, PPM-type phosphatase spans 221 to 622 (DGDYRSTPKG…DDVSIIVMSF (402 aa)). Positions 261 and 262 each coordinate Mn(2+). Residues 324–347 (GGDDDPDAERKAKRGRIERNADDD) form a disordered region. Residues Asp-550 and Asp-613 each coordinate Mn(2+).

It belongs to the PP2C family. Mg(2+) is required as a cofactor. The cofactor is Mn(2+).

It carries out the reaction O-phospho-L-seryl-[protein] + H2O = L-seryl-[protein] + phosphate. The catalysed reaction is O-phospho-L-threonyl-[protein] + H2O = L-threonyl-[protein] + phosphate. The chain is Probable protein phosphatase 2C 31 from Oryza sativa subsp. japonica (Rice).